A 323-amino-acid polypeptide reads, in one-letter code: Beta-ketoacyl-[acyl-carrier-protein] synthase III (323 aa).

Residues cysteine 113 and histidine 250 contribute to the active site. The interval 251–255 (QANRR) is ACP-binding. Asparagine 280 is a catalytic residue.

This sequence belongs to the thiolase-like superfamily. FabH family. Homodimer.

It localises to the cytoplasm. The catalysed reaction is malonyl-[ACP] + acetyl-CoA + H(+) = 3-oxobutanoyl-[ACP] + CO2 + CoA. It functions in the pathway lipid metabolism; fatty acid biosynthesis. In terms of biological role, catalyzes the condensation reaction of fatty acid synthesis by the addition to an acyl acceptor of two carbons from malonyl-ACP. Catalyzes the first condensation reaction which initiates fatty acid synthesis and may therefore play a role in governing the total rate of fatty acid production. Possesses both acetoacetyl-ACP synthase and acetyl transacylase activities. Its substrate specificity determines the biosynthesis of branched-chain and/or straight-chain of fatty acids. This is Beta-ketoacyl-[acyl-carrier-protein] synthase III from Allorhizobium ampelinum (strain ATCC BAA-846 / DSM 112012 / S4) (Agrobacterium vitis (strain S4)).